The primary structure comprises 288 residues: Elongation factor Ts (288 aa).

An involved in Mg(2+) ion dislocation from EF-Tu region spans residues 82–85 (TDFV).

It belongs to the EF-Ts family.

The protein resides in the cytoplasm. Functionally, associates with the EF-Tu.GDP complex and induces the exchange of GDP to GTP. It remains bound to the aminoacyl-tRNA.EF-Tu.GTP complex up to the GTP hydrolysis stage on the ribosome. The chain is Elongation factor Ts from Chlorobium phaeovibrioides (strain DSM 265 / 1930) (Prosthecochloris vibrioformis (strain DSM 265)).